A 453-amino-acid polypeptide reads, in one-letter code: Macrophage scavenger receptor types I and II (453 aa).

Residues Met1 to Lys50 are Cytoplasmic-facing. Ser27 is subject to Phosphoserine. Residues Thr51–Leu76 form a helical; Signal-anchor for type II membrane protein membrane-spanning segment. The segment at Lys77–Arg108 is spacer. Topologically, residues Lys77–Thr453 are extracellular. Asn82, Asn101, Asn142, Asn183, Asn220, Asn248, and Asn266 each carry an N-linked (GlcNAc...) asparagine glycan. Residues Glu194–Leu255 adopt a coiled-coil conformation. Disordered regions lie at residues Ile267–Pro295 and Pro313–Ser349. A Collagen-like domain is found at Gly272–Gly343. In terms of domain architecture, SRCR spans Val352–Thr452. 3 disulfide bridges follow: Cys377-Cys441, Cys390-Cys451, and Cys421-Cys431.

Homotrimer. Interacts with MYO18A.

Its subcellular location is the membrane. In terms of biological role, membrane glycoproteins implicated in the pathologic deposition of cholesterol in arterial walls during atherogenesis. Two types of receptor subunits exist. These receptors mediate the endocytosis of a diverse group of macromolecules, including modified low density lipoproteins (LDL). The protein is Macrophage scavenger receptor types I and II (MSR1) of Bos taurus (Bovine).